The sequence spans 321 residues: CRISPR system ring nuclease SSO1393 (321 aa).

The protein belongs to the cOA ring nuclease family. In terms of assembly, homodimer. Does not require a metal cofactor. is required as a cofactor.

Its subcellular location is the cytoplasm. It catalyses the reaction cyclic tetraadenylate = 2 5'-hydroxy-diadenylate 2',3'-cylic phosphate. CRISPR (clustered regularly interspaced short palindromic repeat) is an adaptive immune system that provides protection against mobile genetic elements (viruses, transposable elements and conjugative plasmids). CRISPR clusters contain spacers, sequences complementary to antecedent mobile elements, and target invading nucleic acids. CRISPR clusters are transcribed and processed into CRISPR RNA (crRNA). A nuclease that degrades cyclic oligoadenylates (cOA), second messengers that induce an antiviral state important for defense against invading nucleic acids. Destruction of cOA deactivates the Csx1 ribonuclease, preventing uncontrolled degradation of cellular RNA. Slowly degrades cA4 (a tetraadenylate ring) into first a linear tetraadenylate product and secondly into a linear diadenylate product with 5'-OH and 2',3'-cyclic phosphate termini. Is 10-fold less active than SSO2081, suggesting it plays a minor role in cA4 degradation. There may be 2 active sites per homodimer. The polypeptide is CRISPR system ring nuclease SSO1393 (Saccharolobus solfataricus (strain ATCC 35092 / DSM 1617 / JCM 11322 / P2) (Sulfolobus solfataricus)).